The chain runs to 420 residues: Histidine--tRNA ligase (420 aa).

The protein belongs to the class-II aminoacyl-tRNA synthetase family. Homodimer.

It is found in the cytoplasm. It carries out the reaction tRNA(His) + L-histidine + ATP = L-histidyl-tRNA(His) + AMP + diphosphate + H(+). In Staphylococcus saprophyticus subsp. saprophyticus (strain ATCC 15305 / DSM 20229 / NCIMB 8711 / NCTC 7292 / S-41), this protein is Histidine--tRNA ligase.